A 461-amino-acid chain; its full sequence is MKEPDAIKLFVGQIPRHLEEKDLKPIFEQFGRIFELTVIKDKYTGLHKGCAFLTYCARDSALKAQSALHEQKTLPGMNRPIQVKPADSESRGEDRKLFVGMLGKQQTDEDVRKMFEPFGTIDECTVLRGPDGTSKGCAFVKFQTHAEAQAAINTLHSSRTLPGASSSLVVKFADTEKERGLRRMQQVATQLGMFSPIALQFGAYSAYTQALMQQQAALVAAHSAYLSPMATMAAVQMQHMAAINANGLIATPITPSSGTSTPPAIAATPVSAIPAALGVNGYSPVPTQPTGQPAPDALYPNGVHPYPAQSPAAPVDPLQQAYAGMQHYTAYPAAYSLVAPAFPQPPALVAQQPPPPPQQQQQQQQQQQQREGPDGCNIFIYHLPQEFTDSEILQMFVPFGHVISAKVFVDRATNQSKCFGFVSFDNPASAQAAIQAMNGFQIGMKRLKVQLKRPKDANRPY.

2 consecutive RRM domains span residues 7-88 and 95-175; these read IKLF…PADS and RKLF…FADT. Residues 345-358 are compositionally biased toward pro residues; it reads PPALVAQQPPPPPQ. The disordered stretch occupies residues 345 to 375; that stretch reads PPALVAQQPPPPPQQQQQQQQQQQQREGPDG. The segment covering 359 to 369 has biased composition (low complexity); it reads QQQQQQQQQQQ. An RRM 3 domain is found at 376–454; the sequence is CNIFIYHLPQ…KRLKVQLKRP (79 aa).

This sequence belongs to the CELF/BRUNOL family.

It is found in the nucleus. Its subcellular location is the cytoplasm. Functionally, RNA-binding protein involved in the regulation of pre-mRNA alternative splicing. Mediates exon inclusion and/or exclusion in pre-mRNA that are subject to tissue-specific and developmentally regulated alternative splicing. Specifically activates exon 5 inclusion of cardiac isoforms of TNNT2 during heart remodeling at the juvenile to adult transition. Activates the splicing of MAPT/Tau exon 10. Binds to muscle-specific splicing enhancer (MSE) intronic sites flanking the alternative exon 5 of TNNT2 pre-mRNA. The polypeptide is CUGBP Elav-like family member 3 (CELF3) (Bos taurus (Bovine)).